Consider the following 449-residue polypeptide: Signal recognition particle protein (449 aa).

GTP-binding positions include 109–116 (GLQGGGKT), 191–195 (DTAGR), and 249–252 (SRID).

This sequence belongs to the GTP-binding SRP family. SRP54 subfamily. In terms of assembly, part of the signal recognition particle protein translocation system, which is composed of SRP and FtsY. SRP is a ribonucleoprotein composed of Ffh and a 4.5S RNA molecule.

The protein localises to the cytoplasm. The catalysed reaction is GTP + H2O = GDP + phosphate + H(+). Functionally, involved in targeting and insertion of nascent membrane proteins into the cytoplasmic membrane. Binds to the hydrophobic signal sequence of the ribosome-nascent chain (RNC) as it emerges from the ribosomes. The SRP-RNC complex is then targeted to the cytoplasmic membrane where it interacts with the SRP receptor FtsY. Interaction with FtsY leads to the transfer of the RNC complex to the Sec translocase for insertion into the membrane, the hydrolysis of GTP by both Ffh and FtsY, and the dissociation of the SRP-FtsY complex into the individual components. The chain is Signal recognition particle protein from Rickettsia typhi (strain ATCC VR-144 / Wilmington).